The chain runs to 396 residues: L-cysteine desulfidase (396 aa).

Cys23 (proton acceptor) is an active-site residue. Cys288, Cys330, and Cys337 together coordinate [4Fe-4S] cluster.

The protein belongs to the L-cysteine desulfidase family. In terms of assembly, homotrimer. The cofactor is [4Fe-4S] cluster.

It carries out the reaction L-cysteine + H2O = hydrogen sulfide + pyruvate + NH4(+) + H(+). Catalyzes the cleavage of L-cysteine to form 2-aminoprop-2-enoate and sulfide. The former then spontaneously hydrolyzes to pyruvate and NH(3). May be responsible for the production of sulfide required for the biosynthesis of iron-sulfur centers in this archaea. This Methanococcus maripaludis (strain C6 / ATCC BAA-1332) protein is L-cysteine desulfidase.